Consider the following 297-residue polypeptide: Ribosomal RNA small subunit methyltransferase A (297 aa).

Residues Asn28, Leu30, Gly55, Glu76, Asp101, and Asn126 each contribute to the S-adenosyl-L-methionine site.

Belongs to the class I-like SAM-binding methyltransferase superfamily. rRNA adenine N(6)-methyltransferase family. RsmA subfamily.

The protein localises to the cytoplasm. It carries out the reaction adenosine(1518)/adenosine(1519) in 16S rRNA + 4 S-adenosyl-L-methionine = N(6)-dimethyladenosine(1518)/N(6)-dimethyladenosine(1519) in 16S rRNA + 4 S-adenosyl-L-homocysteine + 4 H(+). In terms of biological role, specifically dimethylates two adjacent adenosines (A1518 and A1519) in the loop of a conserved hairpin near the 3'-end of 16S rRNA in the 30S particle. May play a critical role in biogenesis of 30S subunits. This Latilactobacillus sakei subsp. sakei (strain 23K) (Lactobacillus sakei subsp. sakei) protein is Ribosomal RNA small subunit methyltransferase A.